The following is a 235-amino-acid chain: Glycerol uptake facilitator protein 2 (235 aa).

6 consecutive transmembrane segments (helical) span residues phenylalanine 4–alanine 24, phenylalanine 39–glycine 59, glycine 62–asparagine 82, valine 83–isoleucine 103, valine 134–leucine 154, and methionine 165–isoleucine 185. The NPA 1 motif lies at asparagine 65–alanine 67. The short motif at asparagine 186–alanine 188 is the NPA 2 element. Residues tryptophan 210 to leucine 230 form a helical membrane-spanning segment.

The protein belongs to the MIP/aquaporin (TC 1.A.8) family.

It localises to the cell membrane. Its function is as follows. Transporter that facilitates the transmembrane diffusion of water, dihydroxyacetone, glycerol and H(2)O(2). Is not permeable to urea and D/L-lactic acid. The protein is Glycerol uptake facilitator protein 2 of Lactiplantibacillus plantarum (strain ATCC BAA-793 / NCIMB 8826 / WCFS1) (Lactobacillus plantarum).